We begin with the raw amino-acid sequence, 261 residues long: Early E1A protein (261 aa).

Positions 43–51 (PTLHDLYDL) are interaction with RB1 in competition with E2F1. The tract at residues 78–149 (EGLDINPPPE…VNEGVKAASD (72 aa)) is interaction with UBE2I. The PXLXP motif, interaction with host ZMYND11 motif lies at 106 to 110 (PDLGA). Residues 115–119 (LRCYE) carry the LXCXE motif, interaction with host RB1 and TMEM173/STING motif. The segment at 163–183 (CKSCEFHRNNTGMKELLCSLC) is a zinc-finger region. Residues 197–261 (SDDESPSPDS…DLSTRKLPRQ (65 aa)) form a disordered region. Low complexity predominate over residues 203-212 (SPDSTTSPPE). Residues 250–254 (PLDLS) carry the PXDLS motif, CTBP-binding motif. Positions 256 to 261 (RKLPRQ) match the Nuclear localization signal motif.

It belongs to the adenoviridae E1A protein family. In terms of assembly, interacts with host UBE2I; this interaction interferes with polySUMOylation. Interacts with host RB1; this interaction induces the aberrant dissociation of RB1-E2F1 complex thereby disrupting the activity of RB1 and activating E2F1-regulated genes. Interacts with host ATF7; the interaction enhances ATF7-mediated viral transactivation activity which requires the zinc binding domains of both proteins. Isoform early E1A 32 kDa protein and isoform early E1A 26 kDa protein interact (via N-terminus) with CUL1 and E3 ubiquitin ligase RBX1; these interactions inhibit RBX1-CUL1-dependent elongation reaction of ubiquitin chains and attenuate ubiquitination of SCF(FBXW7) target proteins. Interacts (via PXLXP motif) with host ZMYND11/BS69 (via MYND-type zinc finger); this interaction inhibits E1A mediated transactivation. Interacts with host EP300; this interaction stimulates the acetylation of RB1 by recruiting EP300 and RB1 into a multimeric-protein complex. Interacts with host CTBP1 and CTBP2; this interaction seems to potentiate viral replication. Interacts with host DCAF7. Interacts with host DYRK1A. Interacts with host KPNA4; this interaction allows E1A import into the host nucleus. Interacts with host EP400; this interaction stabilizes MYC. Interacts with host TBP protein; this interaction probably disrupts the TBP-TATA complex. Interacts (via LXCXE motif) with host TMEM173/STING; this interaction impairs the ability of TMEM173/STING to sense cytosolic DNA and promote the production of type I interferon (IFN-alpha and IFN-beta). Interacts (via C-terminus) with host ZBED1/hDREF (via C-terminus); the interaction is direct.

The protein resides in the host nucleus. Plays a role in viral genome replication by driving entry of quiescent cells into the cell cycle. Stimulation of progression from G1 to S phase allows the virus to efficiently use the cellular DNA replicating machinery to achieve viral genome replication. E1A protein has both transforming and trans-activating activities. Induces the disassembly of the E2F1 transcription factor from RB1 by direct competition for the same binding site on RB1, with subsequent transcriptional activation of E2F1-regulated S-phase genes and of the E2 region of the adenoviral genome. Release of E2F1 leads to the ARF-mediated inhibition of MDM2 and causes TP53/p53 to accumulate because it is not targeted for degradation by MDM2-mediated ubiquitination anymore. This increase in TP53, in turn, would arrest the cell proliferation and direct its death but this effect is counteracted by the viral protein E1B-55K. Inactivation of the ability of RB1 to arrest the cell cycle is critical for cellular transformation, uncontrolled cellular growth and proliferation induced by viral infection. Interaction with RBX1 and CUL1 inhibits ubiquitination of the proteins targeted by SCF(FBXW7) ubiquitin ligase complex, and may be linked to unregulated host cell proliferation. The tumorigenesis-restraining activity of E1A may be related to the disruption of the host CtBP-CtIP complex through the CtBP binding motif. Interaction with host TMEM173/STING impairs the ability of TMEM173/STING to sense cytosolic DNA and promote the production of type I interferon (IFN-alpha and IFN-beta). Promotes the sumoylation of host ZBED1/hDREF with SUMO1. In Human adenovirus B serotype 7 (HAdV-7), this protein is Early E1A protein.